The chain runs to 190 residues: Segregation and condensation protein B (190 aa).

The protein belongs to the ScpB family. Homodimer. Homodimerization may be required to stabilize the binding of ScpA to the Smc head domains. Component of a cohesin-like complex composed of ScpA, ScpB and the Smc homodimer, in which ScpA and ScpB bind to the head domain of Smc. The presence of the three proteins is required for the association of the complex with DNA.

The protein localises to the cytoplasm. Its function is as follows. Participates in chromosomal partition during cell division. May act via the formation of a condensin-like complex containing Smc and ScpA that pull DNA away from mid-cell into both cell halves. In Bacillus cereus (strain ZK / E33L), this protein is Segregation and condensation protein B.